A 586-amino-acid chain; its full sequence is U-box domain-containing protein 73 (586 aa).

Residues 21–122 form a disordered region; that stretch reads KADMSGLQRS…AAGADDGPTR (102 aa). Over residues 50–60 the composition is skewed to low complexity; sequence RSAPTSPLRTP. Positions 182 to 258 constitute a U-box domain; the sequence is PIPIAHDGTL…SAWCLDHSDL (77 aa).

The catalysed reaction is S-ubiquitinyl-[E2 ubiquitin-conjugating enzyme]-L-cysteine + [acceptor protein]-L-lysine = [E2 ubiquitin-conjugating enzyme]-L-cysteine + N(6)-ubiquitinyl-[acceptor protein]-L-lysine.. It participates in protein modification; protein ubiquitination. Functionally, possesses E3 ubiquitin-protein ligase in vitro. This Oryza sativa subsp. japonica (Rice) protein is U-box domain-containing protein 73 (PUB73).